The sequence spans 484 residues: Solute carrier family 40 member 1 (484 aa).

Transmembrane regions (helical) follow at residues 58–78 (LLTAVYGVVEASAVAALGPIV), 94–114 (WLLLQGASFVAAGVSVTALLV), 123–143 (GFPAFVALVVVTNVSGALAAL), 189–209 (VLSGFFISFVSMEASAAALAA), 212–232 (LAAVWVQYWLFVSVYAGFPAL), 279–299 (VVLPGVALAFLYFTVLSFGTL), 308–328 (GIPAYVISLARGVSAAVGIAA), 346–366 (LWSIWAQWCCLLVCVASVWAG), 377–397 (LMGGVAASRLGLWMFDLAVMQ), 413–433 (GVQNSLQSMFDLLTYVMGIIV), and 442–462 (LIVLSFFLVTCAAAMYTMHVY).

It belongs to the ferroportin (FP) (TC 2.A.100) family. SLC40A subfamily.

It is found in the membrane. Its function is as follows. May be involved in iron transport and iron homeostasis. This Oryza sativa subsp. japonica (Rice) protein is Solute carrier family 40 member 1.